The chain runs to 260 residues: Dolichol-phosphate mannosyltransferase subunit 1 (260 aa).

The tract at residues 1 to 25 (MASTGASRSLAASPRPPQGRSSRQD) is disordered. N-acetylalanine is present on Ala2. Phosphoserine is present on residues Ser3 and Ser9. Residues Pro32, Tyr34, Glu36, Ile63, Asp65, Asp118, Ala119, Asp120, Arg147, Arg234, and Lys240 each coordinate GDP-alpha-D-mannose. Asp120 provides a ligand contact to Mg(2+). Asp120 lines the Mn(2+) pocket.

This sequence belongs to the glycosyltransferase 2 family. As to quaternary structure, component of the dolichol-phosphate mannose (DPM) synthase complex composed of DPM1, DPM2 and DPM3; within the complex, directly interacts with DPM3. This interaction may stabilize DPM1. Mg(2+) is required as a cofactor. Mn(2+) serves as cofactor. It depends on Ca(2+) as a cofactor.

The protein resides in the endoplasmic reticulum. The catalysed reaction is a di-trans,poly-cis-dolichyl phosphate + GDP-alpha-D-mannose = a di-trans,poly-cis-dolichyl beta-D-mannosyl phosphate + GDP. The protein operates within protein modification; protein glycosylation. Functionally, transfers mannose from GDP-mannose to dolichol monophosphate to form dolichol phosphate mannose (Dol-P-Man) which is the mannosyl donor in pathways leading to N-glycosylation, glycosyl phosphatidylinositol membrane anchoring, and O-mannosylation of proteins; catalytic subunit of the dolichol-phosphate mannose (DPM) synthase complex. This is Dolichol-phosphate mannosyltransferase subunit 1 (Dpm1) from Mus musculus (Mouse).